Here is a 260-residue protein sequence, read N- to C-terminus: Flavin-dependent thymidylate synthase (260 aa).

In terms of domain architecture, ThyX spans 2–203 (ISVKLVSYTN…PRLFKYTGPN (202 aa)). Residues S56, 80–82 (RHR), and Q88 contribute to the FAD site. DUMP is bound by residues 77–80 (QLVR), 88–92 (QMSHR), and R142. A ThyX motif motif is present at residues 80-90 (RHRIASYTQMS). FAD is bound by residues 158-160 (NAR) and N164. R169 contributes to the dUMP binding site. R169 serves as the catalytic Involved in ionization of N3 of dUMP, leading to its activation.

The protein belongs to the thymidylate synthase ThyX family. As to quaternary structure, homotetramer. It depends on FAD as a cofactor.

The enzyme catalyses dUMP + (6R)-5,10-methylene-5,6,7,8-tetrahydrofolate + NADPH + H(+) = dTMP + (6S)-5,6,7,8-tetrahydrofolate + NADP(+). The protein operates within pyrimidine metabolism; dTTP biosynthesis. In terms of biological role, catalyzes the reductive methylation of 2'-deoxyuridine-5'-monophosphate (dUMP) to 2'-deoxythymidine-5'-monophosphate (dTMP) while utilizing 5,10-methylenetetrahydrofolate (mTHF) as the methyl donor, and NADPH and FADH(2) as the reductant. The polypeptide is Flavin-dependent thymidylate synthase (Saccharolobus solfataricus (strain ATCC 35092 / DSM 1617 / JCM 11322 / P2) (Sulfolobus solfataricus)).